A 562-amino-acid polypeptide reads, in one-letter code: Protein wntless (562 aa).

Residues 1–13 (MSGTILENLSGRK) are Cytoplasmic-facing. A helical transmembrane segment spans residues 14 to 34 (LSILVSSLMLCQVACFLMGGL). Topologically, residues 35-239 (YAPVPAGHQT…AIHQNGGFTQ (205 aa)) are lumenal. Asn-58 and Asn-103 each carry an N-linked (GlcNAc...) asparagine glycan. A helical membrane pass occupies residues 240 to 260 (VWLLLKTLLFPFVVGIMIWFW). Over 261 to 270 (RRVHILQRSP) the chain is Cytoplasmic. The helical transmembrane segment at 271-291 (ALLEYMLLYLGGALSFLNLPL) threads the bilayer. The Lumenal segment spans residues 292 to 311 (EYLTLSIEMPYMLLLSDVRQ). A helical transmembrane segment spans residues 312–332 (GIFYAMLLSFWLVFAGEHMLI). Over 333–344 (QDTPNKSTIRSR) the chain is Cytoplasmic. The chain crosses the membrane as a helical span at residues 345 to 365 (YWKHLSAVVVGCISLFVFDIC). Residues 366–390 (ERGVQLRNPFYSIWTTPLGAKVAMS) are Lumenal-facing. The helical transmembrane segment at 391–411 (FIVLAGVSAAIYFLFLCFMVW) threads the bilayer. Over 412-441 (KVFKDIGDKRTSLPSMSQARRLHYEGLIYR) the chain is Cytoplasmic. Residues 442–462 (FKFLMLATLLCAGLTVAGFIM) traverse the membrane as a helical segment. At 463–482 (GQMAEGHWKWNEDIEIQLTS) the chain is on the lumenal side. A helical membrane pass occupies residues 483 to 503 (AFLTGVYGMWNIYIFALIILY). Residues 504–562 (APSHKQWPTMRHSDETTQSNENIVASAASEEIEFSNLPSDSNPSEISSLTSFTRKVAFD) lie on the Cytoplasmic side of the membrane.

Belongs to the wntless family. In terms of assembly, interacts with wg; in the Golgi. Interacts with Vps35, a component of the retromer complex; wls stability is regulated by Vps35.

Its subcellular location is the presynaptic cell membrane. It is found in the postsynaptic cell membrane. The protein resides in the cell membrane. It localises to the endoplasmic reticulum membrane. The protein localises to the endosome membrane. Its subcellular location is the golgi apparatus membrane. A segment polarity gene required for wingless (wg)-dependent patterning processes, acting in both wg-sending cells and wg-target cells. In non-neuronal cells wls directs wg secretion. The wls traffic loop encompasses the Golgi, the cell surface, an endocytic compartment and a retrograde route leading back to the Golgi, and involves clathrin-mediated endocytosis and the retromer complex (a conserved protein complex consisting of Vps35 and Vps26). In neuronal cells (the larval motorneuron NMJ), the wg signal moves across the synapse via the release of wls-containing exosome-like vesicles. Postsynaptic wls is required for the trafficking of fz2 through the fz2-interacting protein Grip. This chain is Protein wntless, found in Drosophila virilis (Fruit fly).